A 1128-amino-acid chain; its full sequence is Exportin-6 (1128 aa).

The Importin N-terminal domain occupies 31-97 (IEELLNSFAG…RSCLPKLLLS (67 aa)).

The protein belongs to the exportin family.

Its subcellular location is the nucleus. The protein resides in the cytoplasm. Mediates the nuclear export of actin and profilin-actin complexes in somatic cells. The sequence is that of Exportin-6 (xpo6) from Danio rerio (Zebrafish).